A 421-amino-acid chain; its full sequence is NADH-quinone oxidoreductase subunit F (421 aa).

54-63 (GRGGAGFSTG) provides a ligand contact to NAD(+). 166 to 213 (GAGAYICGEETALLESLEGKKGMPRLKPPFPAGFGLYGCPTTINNVES) serves as a coordination point for FMN. Cys344, Cys347, Cys350, and Cys390 together coordinate [4Fe-4S] cluster.

Belongs to the complex I 51 kDa subunit family. FMN is required as a cofactor. It depends on [4Fe-4S] cluster as a cofactor.

The catalysed reaction is a quinone + NADH + 5 H(+)(in) = a quinol + NAD(+) + 4 H(+)(out). Functionally, NDH-1 shuttles electrons from NADH, via FMN and iron-sulfur (Fe-S) centers, to quinones in the respiratory chain. Couples the redox reaction to proton translocation (for every two electrons transferred, four hydrogen ions are translocated across the cytoplasmic membrane), and thus conserves the redox energy in a proton gradient. This is NADH-quinone oxidoreductase subunit F (nuoF) from Rickettsia typhi (strain ATCC VR-144 / Wilmington).